We begin with the raw amino-acid sequence, 197 residues long: Nucleoid occlusion factor SlmA (197 aa).

Residues 7–67 (INRREHILQC…GLIEFIEESL (61 aa)) enclose the HTH tetR-type domain. The H-T-H motif DNA-binding region spans 30–49 (TTAKLAAEVGVSEAALYRHF). Positions 109 to 136 (DALLGENERLRSRISQLFSKIETHLKQI) form a coiled coil.

It belongs to the nucleoid occlusion factor SlmA family. In terms of assembly, homodimer. Interacts with FtsZ.

The protein localises to the cytoplasm. The protein resides in the nucleoid. In terms of biological role, required for nucleoid occlusion (NO) phenomenon, which prevents Z-ring formation and cell division over the nucleoid. Acts as a DNA-associated cell division inhibitor that binds simultaneously chromosomal DNA and FtsZ, and disrupts the assembly of FtsZ polymers. SlmA-DNA-binding sequences (SBS) are dispersed on non-Ter regions of the chromosome, preventing FtsZ polymerization at these regions. This Shewanella pealeana (strain ATCC 700345 / ANG-SQ1) protein is Nucleoid occlusion factor SlmA.